Consider the following 332-residue polypeptide: Ribosomal RNA small subunit methyltransferase H (332 aa).

S-adenosyl-L-methionine contacts are provided by residues 36–38, D54, F81, D102, and Q109; that span reads GGY.

This sequence belongs to the methyltransferase superfamily. RsmH family.

It localises to the cytoplasm. It catalyses the reaction cytidine(1402) in 16S rRNA + S-adenosyl-L-methionine = N(4)-methylcytidine(1402) in 16S rRNA + S-adenosyl-L-homocysteine + H(+). Functionally, specifically methylates the N4 position of cytidine in position 1402 (C1402) of 16S rRNA. This is Ribosomal RNA small subunit methyltransferase H from Nitrobacter winogradskyi (strain ATCC 25391 / DSM 10237 / CIP 104748 / NCIMB 11846 / Nb-255).